The sequence spans 758 residues: 5-methyltetrahydropteroyltriglutamate--homocysteine methyltransferase (758 aa).

Residues 16–19 (RELK) and lysine 112 each bind 5-methyltetrahydropteroyltri-L-glutamate. Residues 433–435 (IGS) and glutamate 486 contribute to the L-homocysteine site. L-methionine contacts are provided by residues 433-435 (IGS) and glutamate 486. 5-methyltetrahydropteroyltri-L-glutamate is bound by residues 517–518 (RC) and tryptophan 563. Aspartate 601 is a binding site for L-homocysteine. Aspartate 601 lines the L-methionine pocket. Glutamate 607 is a binding site for 5-methyltetrahydropteroyltri-L-glutamate. Zn(2+)-binding residues include histidine 643, cysteine 645, and glutamate 667. Histidine 696 functions as the Proton donor in the catalytic mechanism. Cysteine 728 provides a ligand contact to Zn(2+).

This sequence belongs to the vitamin-B12 independent methionine synthase family. Zn(2+) is required as a cofactor.

It catalyses the reaction 5-methyltetrahydropteroyltri-L-glutamate + L-homocysteine = tetrahydropteroyltri-L-glutamate + L-methionine. It participates in amino-acid biosynthesis; L-methionine biosynthesis via de novo pathway; L-methionine from L-homocysteine (MetE route): step 1/1. Its function is as follows. Catalyzes the transfer of a methyl group from 5-methyltetrahydrofolate to homocysteine resulting in methionine formation. The polypeptide is 5-methyltetrahydropteroyltriglutamate--homocysteine methyltransferase (Neisseria meningitidis serogroup C (strain 053442)).